The following is a 152-amino-acid chain: UPF0225 protein YchJ (152 aa).

It belongs to the UPF0225 family.

This Shigella flexneri serotype 5b (strain 8401) protein is UPF0225 protein YchJ.